Reading from the N-terminus, the 313-residue chain is GDP-D-glycero-alpha-D-manno-heptose dehydrogenase (313 aa).

NADH-binding positions include 13–14, 33–39, Phe37, 57–58, Leu77, and 144–148; these read YI, DNLMFDQ, DA, and YGIDK. GDP is bound at residue Thr168. NADH contacts are provided by residues Val169 and 175-177; that span reads RMR. GDP-binding positions include 179–184, 196–198, Arg204, Lys242, and Arg270; these read DLLVND and VLF. Residue Asn311 coordinates NADH.

Homotetramer. NAD(+) serves as cofactor.

The enzyme catalyses GDP-D-glycero-alpha-D-manno-heptose + 2-oxoglutarate = GDP-D-glycero-4-keto-alpha-D-lyxo-heptose + (S)-2-hydroxyglutarate. It participates in capsule biogenesis; capsule polysaccharide biosynthesis. Functionally, NAD-dependent dehydrogenase involved in the biosynthesis of heptose moieties with a hydroxyl group at C6 found on the capsular polysaccharide (CPS) of C.jejuni. Catalyzes the initial oxidation of C4 of the GDP-D-glycero-alpha-D-manno-heptose to form GDP-D-glycero-4-keto-alpha-D-lyxo-heptose in the presence of alpha-ketoglutarate required to recycle the NADH nucleotide. This chain is GDP-D-glycero-alpha-D-manno-heptose dehydrogenase, found in Campylobacter jejuni subsp. jejuni serotype O:2 (strain ATCC 700819 / NCTC 11168).